A 140-amino-acid chain; its full sequence is Putative nickel-responsive regulator 3 (140 aa).

Residues H81, H92, H94, and C100 each contribute to the Ni(2+) site.

Belongs to the transcriptional regulatory CopG/NikR family. The cofactor is Ni(2+).

Its function is as follows. Transcriptional regulator. The sequence is that of Putative nickel-responsive regulator 3 from Methanosarcina acetivorans (strain ATCC 35395 / DSM 2834 / JCM 12185 / C2A).